Reading from the N-terminus, the 430-residue chain is Enolase (430 aa).

Position 167 (Gln-167) interacts with (2R)-2-phosphoglycerate. Glu-209 serves as the catalytic Proton donor. Residues Asp-245, Glu-286, and Asp-313 each contribute to the Mg(2+) site. 4 residues coordinate (2R)-2-phosphoglycerate: Lys-338, Arg-367, Ser-368, and Lys-389. Catalysis depends on Lys-338, which acts as the Proton acceptor.

It belongs to the enolase family. Requires Mg(2+) as cofactor.

Its subcellular location is the cytoplasm. It is found in the secreted. The protein resides in the cell surface. The enzyme catalyses (2R)-2-phosphoglycerate = phosphoenolpyruvate + H2O. The protein operates within carbohydrate degradation; glycolysis; pyruvate from D-glyceraldehyde 3-phosphate: step 4/5. Functionally, catalyzes the reversible conversion of 2-phosphoglycerate (2-PG) into phosphoenolpyruvate (PEP). It is essential for the degradation of carbohydrates via glycolysis. This is Enolase from Synechococcus sp. (strain CC9311).